Reading from the N-terminus, the 195-residue chain is Small ribosomal subunit protein bS16 (195 aa).

Over residues 171–181 the composition is skewed to low complexity; that stretch reads PEAPVAAAEPA. The segment at 171 to 195 is disordered; the sequence is PEAPVAAAEPAPEVKAEEKEEGGEA.

This sequence belongs to the bacterial ribosomal protein bS16 family.

This Chlorobium luteolum (strain DSM 273 / BCRC 81028 / 2530) (Pelodictyon luteolum) protein is Small ribosomal subunit protein bS16.